Reading from the N-terminus, the 350-residue chain is Dihydroorotase (350 aa).

Zn(2+)-binding residues include His-17 and His-19. Substrate is bound by residues 19-21 and Asn-45; that span reads HLR. The Zn(2+) site is built by Lys-103, His-140, and His-178. At Lys-103 the chain carries N6-carboxylysine. His-140 contacts substrate. Residue Leu-224 participates in substrate binding. Asp-252 contacts Zn(2+). Asp-252 is an active-site residue. Positions 256 and 268 each coordinate substrate.

It belongs to the metallo-dependent hydrolases superfamily. DHOase family. Class II DHOase subfamily. As to quaternary structure, homodimer. Requires Zn(2+) as cofactor.

It carries out the reaction (S)-dihydroorotate + H2O = N-carbamoyl-L-aspartate + H(+). It functions in the pathway pyrimidine metabolism; UMP biosynthesis via de novo pathway; (S)-dihydroorotate from bicarbonate: step 3/3. Functionally, catalyzes the reversible cyclization of carbamoyl aspartate to dihydroorotate. The sequence is that of Dihydroorotase from Buchnera aphidicola subsp. Acyrthosiphon pisum (strain APS) (Acyrthosiphon pisum symbiotic bacterium).